Here is a 1234-residue protein sequence, read N- to C-terminus: Anion exchange protein 2 (1234 aa).

Residues 1–239 (MSSAPRRPAS…YNLQERRRIG (239 aa)) form a disordered region. Residues 1 to 704 (MSSAPRRPAS…SDFRDALDPQ (704 aa)) are Cytoplasmic-facing. Composition is skewed to basic and acidic residues over residues 39–49 (LRTLGVERFEE) and 58–75 (GGEE…EYHR). 2 stretches are compositionally biased toward basic residues: residues 76–85 (QSSHHIHHPL) and 94–110 (RRRK…RRRP). S113 is modified (phosphoserine). Over residues 120 to 133 (TIEEGEEDEDEVGE) the composition is skewed to acidic residues. A phosphoserine mark is found at S145, S171, and S173. Residues 207–216 (TAGGDDGGAA) are compositionally biased toward gly residues. At S240 the chain carries Phosphoserine. T254 bears the Phosphothreonine mark. K271 carries the N6-methyllysine modification. The interval 287-315 (RKNAKGSTQAAREGREPGPTPRARPRAPH) is disordered. Position 440 is a phosphoserine (S440). Positions 446–467 (SLLGHHHAQGTESDPHVTEPLI) are disordered. 4 helical membrane passes run 705 to 728 (CLAA…GLLG), 734 to 771 (LIGV…LLVF), 791 to 813 (VWIG…SFLV), and 823 to 843 (IFAF…LIKI). The interval 705–1234 (CLAAVIFIYF…DEYNEMPMPV (530 aa)) is membrane (anion exchange). The Extracellular segment spans residues 844–893 (FQEHPLHGCSVSNDSEADSSSNNMTWAATTLAPDNSSASGQERPRGQPNT). N-linked (GlcNAc...) asparagine glycosylation is found at N856, N866, and N878. A helical membrane pass occupies residues 894–911 (ALLSLVLMAGTFFIAFFL). Residues 912–926 (RKFKNSRFFPGRIRR) lie on the Cytoplasmic side of the membrane. Helical transmembrane passes span 927–947 (VIGD…DYSI), 981–1003 (PFPV…LIFM), 1029–1050 (LLLI…LAAA), 1084–1129 (VTGL…IQFY), and 1156–1192 (MHLF…TVPL). C1166 carries the S-palmitoyl cysteine lipid modification.

The protein belongs to the anion exchanger (TC 2.A.31) family. In terms of tissue distribution, expressed in the parotid and submandibular glands (at protein level). Expressed in the gastric mucosa (at protein level). Expressed in the choroid plexus epithelium (at protein level). Expressed in the liver and gallbladder.

The protein localises to the apical cell membrane. Its subcellular location is the basolateral cell membrane. It carries out the reaction hydrogencarbonate(in) + chloride(out) = hydrogencarbonate(out) + chloride(in). Its activity is regulated as follows. Inhibited by 4,4'-diisothiocyanatostilbene-2,2'-disulfonic acid (DIDS). Functionally, sodium-independent anion exchanger which mediates the electroneutral exchange of chloride for bicarbonate ions across the cell membrane. Plays an important role in osteoclast differentiation and function. Regulates bone resorption and calpain-dependent actin cytoskeleton organization in osteoclasts via anion exchange-dependent control of pH. Essential for intracellular pH regulation in CD8(+) T-cells upon CD3 stimulation, modulating CD8(+) T-cell responses. The polypeptide is Anion exchange protein 2 (Slc4a2) (Rattus norvegicus (Rat)).